The chain runs to 363 residues: Galactokinase (363 aa).

Substrate is bound at residue 16–19; it reads EHTD. ATP is bound by residues serine 50 and 103-109; that span reads GSGLSSS. The Mg(2+) site is built by serine 109 and glutamate 141. Aspartate 153 serves as the catalytic Proton acceptor. Tyrosine 205 is a binding site for substrate.

This sequence belongs to the GHMP kinase family. GalK subfamily.

The protein resides in the cytoplasm. It catalyses the reaction alpha-D-galactose + ATP = alpha-D-galactose 1-phosphate + ADP + H(+). It participates in carbohydrate metabolism; galactose metabolism. Functionally, catalyzes the transfer of the gamma-phosphate of ATP to D-galactose to form alpha-D-galactose-1-phosphate (Gal-1-P). This Mycobacterium tuberculosis (strain ATCC 25177 / H37Ra) protein is Galactokinase.